The following is a 163-amino-acid chain: NADH-quinone oxidoreductase subunit I (163 aa).

4Fe-4S ferredoxin-type domains follow at residues 53 to 83 (LRRYPNGEERCIACKLCEAICPAQAITIEAG) and 94 to 123 (VRYDIDMVKCIYCGFCQEACPVDAIVEGPN). Residues Cys-63, Cys-66, Cys-69, Cys-73, Cys-103, Cys-106, Cys-109, and Cys-113 each contribute to the [4Fe-4S] cluster site.

It belongs to the complex I 23 kDa subunit family. NDH-1 is composed of 14 different subunits. Subunits NuoA, H, J, K, L, M, N constitute the membrane sector of the complex. It depends on [4Fe-4S] cluster as a cofactor.

It localises to the cell inner membrane. It carries out the reaction a quinone + NADH + 5 H(+)(in) = a quinol + NAD(+) + 4 H(+)(out). In terms of biological role, NDH-1 shuttles electrons from NADH, via FMN and iron-sulfur (Fe-S) centers, to quinones in the respiratory chain. The immediate electron acceptor for the enzyme in this species is believed to be ubiquinone. Couples the redox reaction to proton translocation (for every two electrons transferred, four hydrogen ions are translocated across the cytoplasmic membrane), and thus conserves the redox energy in a proton gradient. In Brucella suis (strain ATCC 23445 / NCTC 10510), this protein is NADH-quinone oxidoreductase subunit I.